Consider the following 161-residue polypeptide: Phosphopantetheine adenylyltransferase (161 aa).

Thr-10 contributes to the substrate binding site. Residues 10–11 (TF) and His-18 contribute to the ATP site. Substrate is bound by residues Lys-42, Leu-75, and Arg-89. ATP-binding positions include 90–92 (GLR), Glu-100, and 125–131 (YSFLSSS).

It belongs to the bacterial CoaD family. Homohexamer. The cofactor is Mg(2+).

It is found in the cytoplasm. The catalysed reaction is (R)-4'-phosphopantetheine + ATP + H(+) = 3'-dephospho-CoA + diphosphate. It functions in the pathway cofactor biosynthesis; coenzyme A biosynthesis; CoA from (R)-pantothenate: step 4/5. Its function is as follows. Reversibly transfers an adenylyl group from ATP to 4'-phosphopantetheine, yielding dephospho-CoA (dPCoA) and pyrophosphate. This is Phosphopantetheine adenylyltransferase from Thermodesulfovibrio yellowstonii (strain ATCC 51303 / DSM 11347 / YP87).